Here is a 395-residue protein sequence, read N- to C-terminus: MSARNILVINCGSSSIKFALVNEAQATFPLQGLAECIGSPEAVIHFESAAGKESVKVPNADHQAALAQILPRVEDAAGGHLDGIGHRVVHGGEKFFASTLLNDETLAGIEANIQLAPLHNPANLSGIHAAINLFPELPQVGVFDTAFHQTMPEHAYRYAVPDVLYKDHGVRRYGFHGTSHRYVSKRAAELAGVPVDNSSWLVAHLGNGCSTCAVVNGESRDTSMGLTPLEGLVMGTRSGDVDPSLHNFLHKTLGWDLAKIDNMLNKESGLKGLSGLSNDMRTLAEARQAGHPGAVLAFEVFCYRLAKSLAAMSCALPQLDGLVFTGGIGENSSAVRERTLEHLKLFGFKLDAEANARCTRGVAGEIQAQGSPRVMVVPTNEERQIALDTLALLDA.

Asn10 lines the Mg(2+) pocket. Lys17 serves as a coordination point for ATP. Substrate is bound at residue Arg87. Asp144 serves as the catalytic Proton donor/acceptor. ATP contacts are provided by residues His204–Gly208, Asp279–Arg281, and Gly327–Asn331. Glu381 lines the Mg(2+) pocket.

Belongs to the acetokinase family. As to quaternary structure, homodimer. It depends on Mg(2+) as a cofactor. Mn(2+) serves as cofactor.

Its subcellular location is the cytoplasm. It carries out the reaction acetate + ATP = acetyl phosphate + ADP. It participates in metabolic intermediate biosynthesis; acetyl-CoA biosynthesis; acetyl-CoA from acetate: step 1/2. In terms of biological role, catalyzes the formation of acetyl phosphate from acetate and ATP. Can also catalyze the reverse reaction. This Stutzerimonas stutzeri (strain A1501) (Pseudomonas stutzeri) protein is Acetate kinase.